The chain runs to 170 residues: Disulfide bond formation protein B 1 (170 aa).

Topologically, residues 1–14 are cytoplasmic; it reads MNDYTLAIRRERRL. A helical transmembrane segment spans residues 15–31; sequence LMLLGWVCIALLAGALY. Over 32–49 the chain is Periplasmic; that stretch reads LQYVKNEDPCPLCIIQRY. The cysteines at positions 41 and 44 are disulfide-linked. Residues 50-64 traverse the membrane as a helical segment; it reads FFCAIGIFAFLAAGI. Over 65–71 the chain is Cytoplasmic; the sequence is RNWRGVW. The chain crosses the membrane as a helical span at residues 72 to 89; sequence VLELLIAIAAAGGVGTAA. The Periplasmic portion of the chain corresponds to 90–144; it reads RHLTIQMNPGFSCGFDTLQPIVDSLPPAQWFPGMFKVAGLCETVYPPIFGILLPG. Cys-102 and Cys-130 are joined by a disulfide. The helical transmembrane segment at 145 to 163 threads the bilayer; it reads WSLIGFAVILIAVVASLWR. Residues 164–170 are Cytoplasmic-facing; sequence HRRKLVG.

It belongs to the DsbB family.

Its subcellular location is the cell inner membrane. Required for disulfide bond formation in some periplasmic proteins. Acts by oxidizing the DsbA protein. In Burkholderia lata (strain ATCC 17760 / DSM 23089 / LMG 22485 / NCIMB 9086 / R18194 / 383), this protein is Disulfide bond formation protein B 1.